The following is a 379-amino-acid chain: Gap junction alpha-1 protein (379 aa).

Over 2–23 (GDWSALGRLLDKVQAYSTAGGK) the chain is Cytoplasmic. A helical membrane pass occupies residues 24-44 (VWLSVLFIFRILLLGTAVESA). Topologically, residues 45–76 (WGDEQSAFVCNTQQPGCENVCYDKSFPISHVR) are extracellular. Cystine bridges form between C54-C192 and C187-C198. A helical transmembrane segment spans residues 77 to 97 (FWVLQIIFVSTPTLLYLAHVF). At 98 to 163 (YLMRKEEKLN…TYIISILFKS (66 aa)) the chain is on the cytoplasmic side. The helical transmembrane segment at 164-184 (VFEVGFIIIQWYMYGFSLSAI) threads the bilayer. Topologically, residues 185-207 (YTCKRDPCPHQVDCFLSRPTEKT) are extracellular. The helical transmembrane segment at 208–228 (IFIWFMLIVSIVSLALNIIEL) threads the bilayer. At 229–379 (FYVTYKSIKD…SRPRPDDLEI (151 aa)) the chain is on the cytoplasmic side. The interval 322-379 (STISNTHAQPFDFSDEHQNTKKMAPGHEMQPLTILDQRPSSRASSHASSRPRPDDLEI) is disordered. Low complexity predominate over residues 359 to 371 (RPSSRASSHASSR).

This sequence belongs to the connexin family. Alpha-type (group II) subfamily. As to quaternary structure, a connexon is composed of a hexamer of connexins. Interacts with TMEM65. Expressed in most tissues. Highest levels found in eye and brain.

It localises to the cell membrane. The protein resides in the cell junction. The protein localises to the gap junction. Its function is as follows. One gap junction consists of a cluster of closely packed pairs of transmembrane channels, the connexons, through which materials of low MW diffuse from one cell to a neighboring cell. Plays an essential role in gap junction communication in the ventricles. The protein is Gap junction alpha-1 protein (gja1) of Xenopus laevis (African clawed frog).